The following is a 282-amino-acid chain: Formamidopyrimidine-DNA glycosylase (282 aa).

Residue proline 2 is the Schiff-base intermediate with DNA of the active site. The Proton donor role is filled by glutamate 3. Catalysis depends on lysine 58, which acts as the Proton donor; for beta-elimination activity. DNA contacts are provided by histidine 96, arginine 115, and lysine 152. The segment at 238–272 (HVYGRGGQPCERCGEEILKTVLGGRGTHYCPSCQN) adopts an FPG-type zinc-finger fold. The active-site Proton donor; for delta-elimination activity is arginine 262.

It belongs to the FPG family. In terms of assembly, monomer. Requires Zn(2+) as cofactor.

It catalyses the reaction Hydrolysis of DNA containing ring-opened 7-methylguanine residues, releasing 2,6-diamino-4-hydroxy-5-(N-methyl)formamidopyrimidine.. It carries out the reaction 2'-deoxyribonucleotide-(2'-deoxyribose 5'-phosphate)-2'-deoxyribonucleotide-DNA = a 3'-end 2'-deoxyribonucleotide-(2,3-dehydro-2,3-deoxyribose 5'-phosphate)-DNA + a 5'-end 5'-phospho-2'-deoxyribonucleoside-DNA + H(+). Functionally, involved in base excision repair of DNA damaged by oxidation or by mutagenic agents. Acts as a DNA glycosylase that recognizes and removes damaged bases. Has a preference for oxidized purines, such as 7,8-dihydro-8-oxoguanine (8-oxoG). Has AP (apurinic/apyrimidinic) lyase activity and introduces nicks in the DNA strand. Cleaves the DNA backbone by beta-delta elimination to generate a single-strand break at the site of the removed base with both 3'- and 5'-phosphates. This chain is Formamidopyrimidine-DNA glycosylase, found in Corynebacterium aurimucosum (strain ATCC 700975 / DSM 44827 / CIP 107346 / CN-1) (Corynebacterium nigricans).